A 512-amino-acid chain; its full sequence is Kelch repeat protein C2 (512 aa).

Residues 2-67 enclose the BTB domain; it reads ESVIFSINGE…MRWKKINITI (66 aa). 6 Kelch repeats span residues 216–261, 262–307, 309–354, 356–403, 405–449, and 452–498; these read IKHN…LHNC, LYII…VNDG, LYVI…FVND, IYVM…EYDG, IYVI…SCGD, and LIIA…THKS.

It belongs to the poxviruses Kelch family.

This is Kelch repeat protein C2 from Vaccinia virus (strain Copenhagen) (VACV).